The sequence spans 79 residues: Schistosomin (79 aa).

Contains four disulfide bonds. Growth-controlling neurosecretory light green cells, in the cerebral ganglia of the CNS.

Its subcellular location is the secreted. Anti-gonadotropic neuropeptide. It also decreases the binding capacity of calfluxin to membrane-bound receptors of the albumen gland. This leads to inhibition of the reproductive activities of the infected snail. The protein is Schistosomin of Lymnaea stagnalis (Great pond snail).